We begin with the raw amino-acid sequence, 46 residues long: Alpha-1-antiproteinase (46 aa).

A Phosphoserine modification is found at Ser-30.

Belongs to the serpin family. Post-translationally, N-glycosylated; contains bi- and triantennary glycans with a bisecting N-acetylglucosamine and fucose residue. Plasma.

The protein localises to the secreted. In Notamacropus eugenii (Tammar wallaby), this protein is Alpha-1-antiproteinase.